Consider the following 513-residue polypeptide: Xylose import ATP-binding protein XylG (513 aa).

ABC transporter domains lie at 5–242 and 259–505; these read LEMK…VERE and LRIE…LRSE. 37–44 serves as a coordination point for ATP; the sequence is GENGSGKS.

This sequence belongs to the ABC transporter superfamily. Xylose importer (TC 3.A.1.2.4) family. As to quaternary structure, the complex is composed of two ATP-binding proteins (XylG), two transmembrane proteins (XylH) and a solute-binding protein (XylF).

It is found in the cell inner membrane. The catalysed reaction is D-xylose(out) + ATP + H2O = D-xylose(in) + ADP + phosphate + H(+). In terms of biological role, part of the ABC transporter complex XylFGH involved in xylose import. Responsible for energy coupling to the transport system. The polypeptide is Xylose import ATP-binding protein XylG (Shigella flexneri).